A 1763-amino-acid polypeptide reads, in one-letter code: MSQTLSFVLKTHSVRKDFVHSVKVTLARRRDLQYLYNKLARTMRAEACPSCSSYDVCPNCTSSDIPDNGSSTTSIPSWEDVTKTSTYSLLLSEDTSDELCPDDLVNVAAHIRKALSTQAHPANTEMCKEQLTSLLVMAEAMLPQRSRASIPLHQQHQAARLEWREKFFSKPLDFLLERIGVSKDILQITAIWKIILEKACYCKSYGEQWFCAAKQKLREMRTFESDTLKPLVGAFIDGLRFMTVDNPNPMGFLPKLIGLVKPLNLAMIIDNHENTLSGWVVTLTAIMELYNITECTIDVITSLVTGFYDKISKATKFFSQVKALFTGFRSEDVANSFWYMAAAILCYLITGLIPNNGRFSKIKACLSGATTLVSGIIATQKLAAMFATWNSESIVNELSARTVAISELNNPTTTSDTDSVERLLELAKILHEEIKVHTLNPIMQSYNPILRNLMSTLDGVITSCNKRKAIARKRQVPVCYILTGPPGCGKTTAAQALAKKLSDQEPSVINLDVDHHDTYTGNEVCIIDEFDSSDKVDYANFVIGMVNSAPMVLNCDMLENKGKLFTSKYIIMTSNSETPVKPSSKRAGAFYRRVTIIDVTNPLVESHKRARPGTSVPRSCYKKNFSHLSLAKRGAECWCKEYVLDPKGLQHQTIKAPPPTFLNIDSLAQTMKQDFVLKNMAFEAEDGCSEHRYGFICQQSEVETVRRLLNAIRARLNATFTVCVGPEASHSIGCTAHVLTPDEPFNGRRFIVSRCNEASLAALEGNCVQSALGVCMSNKDLTHLCHFIRGKIVNDSVRLDELPANQHVVTVNSVFDLAWALRRHLTLTGQFQAIRAAYDVLTVPDKVPAMLRHWMDETSFSDEHVVTQFVTPGGVVILESCGGARIWALGHNVIRAGGVTATPTGGCVRLVGLSAQTLPWSEIFRELFTLLGRIWSSIKVSTLVLTALGMYASRFRPKSEAKGKTKSKIGPYRGRGVALTDDEYDEWREHNANRKLDLSVEDFLMLRHRAALGADDADAVKFRSWWNSRTRPGDGFEDVTVIGKGGVKHEKIRTSTLRAVDRGYDVSFAEESGPGTKFHKNAIGSVTDVCGEHKGYCVHMGHGVYASVAHVVKGDSYFLGERIFDVKTNGEFCCFRSTKILPSAAPFFSGKPTRDPWGSPVATEWKPKAYTTTSGKIVGCFATTSTETHPGDCGLPYIDDNGRVTGLHTGSGGPKTPSAKLVVPYIHIDMKNKSVTPQKYDETKPNISYKGLVCKQLDEIRIIPKGTRLHVSPAHVDDFEECSHQPASLGSGDPRCPKSLTAIVVDSLKPYCDRVEGPPHDVLHRVQKMLIDHLSGFVPMNISSETSMLSAFHKLNHDTSCGPYLGGRKKDHMVNGEPDKQLLDLLSSKWKLATQGIALPHEYTIGLKDELRPIEKVQEGKRRMIWGCDVGVATVCAAAFKGVSDAITANHQYGPIQVGINMDSPSVEVLYQRIKSAAKVFAVDYSKWDSTQSPRVSAASIDILRYFSDRSPIVDSAANTLKSPPIAIFNGVAVKVASGLPSGMPLTSVINSLNHCMYVGCAILQSLEARQIPVTWNLFSSFDMMTYGDDGVYMFPTMFASVSDQIFGNLSAYGLKPTRVDKSVGAIESIDPESVVFLKRTITRTPNGIRGLLDRSSIIRQFFYIKGENSDDWKTPPKTIDPTSRGQQLWNACLYASQHGVEFYNKVLKLAMRAVEYEGLHLKPPSYSSALEHYNSQFNGVEARSDQINMSDVTALHCDVFEV.

Positions 458–614 (DGVITSCNKR…ESHKRARPGT (157 aa)) constitute an SF3 helicase domain. An ATP-binding site is contributed by 484–491 (GPPGCGKT). Tyr-984 is subject to O-(5'-phospho-RNA)-tyrosine. Phosphothreonine is present on Thr-1040. Residue Ser-1067 is modified to Phosphoserine. One can recognise a Peptidase C24 domain in the interval 1073 to 1229 (GPGTKFHKNA…KLVVPYIHID (157 aa)). Catalysis depends on for 3CLpro activity residues His-1110, Glu-1131, and Cys-1193. The RdRp catalytic domain occupies 1478–1603 (AKVFAVDYSK…MFPTMFASVS (126 aa)).

In terms of assembly, homodimer. Interacts with NTPase, protein p30 and protease-polymerase p76. As to quaternary structure, interacts with capsid protein VP1 and protease-polymerase p76. Interacts with host IEF4e; this interaction plays a role in translation of viral proteins. Homooligomer. Interacts with Vpg, protein p32 and may interact with capsid protein VP1. Post-translationally, specific enzymatic cleavages in vivo yield mature proteins. Pro-Pol is first autocatalytically cleaved, then processes the whole polyprotein. VPg is uridylylated by the polymerase and is covalently attached to the 5'-end of the polyadenylated genomic and subgenomic RNAs. This uridylylated form acts as a nucleotide-peptide primer for the polymerase.

Its subcellular location is the host endoplasmic reticulum membrane. The catalysed reaction is a ribonucleoside 5'-triphosphate + H2O = a ribonucleoside 5'-diphosphate + phosphate + H(+). It carries out the reaction RNA(n) + a ribonucleoside 5'-triphosphate = RNA(n+1) + diphosphate. The enzyme catalyses Endopeptidase with a preference for cleavage when the P1 position is occupied by Glu-|-Xaa and the P1' position is occupied by Gly-|-Yaa.. Its function is as follows. Together with NTPase and NS4, initiates the formation of the replication complex. Induces the proliferation of the host smooth ER membranes forming long tubular structures. These remodeled membranes probably form the viral factories that contain the replication complex. In terms of biological role, displays NTPase activity, but no helicase activity. Induces the formation of convoluted membranes derived from the host ER. These remodeled membranes probably form the viral factories that contain the replication complex. Together with NS2 and NS4, initiates the formation of the replication complex. Functionally, probable key protein responsible for the formation of membrane alterations by the virus. Induces the formation of convoluted membranes derived from the host ER. These remodeled membranes probably form the viral factories that contain the replication complex. Together with NS2 and NTPase, initiates the formation of the replication complex. Viral genome-linked protein is covalently linked to the 5'-end of the positive-strand, negative-strand genomic RNAs and subgenomic RNA. Acts as a genome-linked replication primer. May recruit ribosome to viral RNA thereby promoting viral proteins translation. Interacts with host translation initiation complex to allow the translation of viral proteins. Its function is as follows. Protease-polymerase p76 processes the polyprotein: Pro-Pol is first released by autocleavage, then all other proteins are cleaved. Cleaves host translation initiation factor eIF4G1, eIF4G2 and PABP1 thereby inducing a shutdown of host protein synthesis. This shutdown may not prevent viral mRNA from being translated since viral Vpg replaces the cap. Also functions as an RNA-directed RNA polymerase, which replicates genomic and antigenomic viral RNA by recognizing specific signals. Also transcribes a subgenomic mRNA by initiating RNA synthesis internally on antigenomic RNA. This sgRNA codes for structural proteins. Catalyzes the covalent attachment VPg with viral RNAs. Cleaves host G3BP1 thereby preventing the assembly of host stress granules. In Feline calicivirus (strain Japanese F4) (FCV), this protein is Genome polyprotein.